A 424-amino-acid chain; its full sequence is UDP-N-acetylglucosamine 1-carboxyvinyltransferase (424 aa).

22 to 23 (KN) serves as a coordination point for phosphoenolpyruvate. UDP-N-acetyl-alpha-D-glucosamine is bound at residue Arg96. The Proton donor role is filled by Cys120. Cys120 bears the 2-(S-cysteinyl)pyruvic acid O-phosphothioketal mark. UDP-N-acetyl-alpha-D-glucosamine contacts are provided by residues 125-129 (RPVDQ), Asp312, and Ile334.

It belongs to the EPSP synthase family. MurA subfamily.

It localises to the cytoplasm. The catalysed reaction is phosphoenolpyruvate + UDP-N-acetyl-alpha-D-glucosamine = UDP-N-acetyl-3-O-(1-carboxyvinyl)-alpha-D-glucosamine + phosphate. It functions in the pathway cell wall biogenesis; peptidoglycan biosynthesis. Its function is as follows. Cell wall formation. Adds enolpyruvyl to UDP-N-acetylglucosamine. This Polynucleobacter necessarius subsp. necessarius (strain STIR1) protein is UDP-N-acetylglucosamine 1-carboxyvinyltransferase.